The primary structure comprises 798 residues: Penicillin-binding protein 1A (798 aa).

Over Met1 to Cys9 the chain is Cytoplasmic. A helical; Signal-anchor for type II membrane protein membrane pass occupies residues Phe10–Val30. At Thr31–Phe798 the chain is on the periplasmic side. Positions Leu50–Glu218 are transglycosylase. Glu88 acts as the Proton donor; for transglycosylase activity in catalysis. Positions Arg378–Asp700 are transpeptidase. Ser461 serves as the catalytic Acyl-ester intermediate; for transpeptidase activity. The segment at Gly738–Phe798 is disordered. A compositionally biased stretch (basic and acidic residues) spans Ala768–Met777. Residues Leu783–Phe798 are compositionally biased toward polar residues.

In the N-terminal section; belongs to the glycosyltransferase 51 family. It in the C-terminal section; belongs to the transpeptidase family.

The protein localises to the cell inner membrane. The enzyme catalyses [GlcNAc-(1-&gt;4)-Mur2Ac(oyl-L-Ala-gamma-D-Glu-L-Lys-D-Ala-D-Ala)](n)-di-trans,octa-cis-undecaprenyl diphosphate + beta-D-GlcNAc-(1-&gt;4)-Mur2Ac(oyl-L-Ala-gamma-D-Glu-L-Lys-D-Ala-D-Ala)-di-trans,octa-cis-undecaprenyl diphosphate = [GlcNAc-(1-&gt;4)-Mur2Ac(oyl-L-Ala-gamma-D-Glu-L-Lys-D-Ala-D-Ala)](n+1)-di-trans,octa-cis-undecaprenyl diphosphate + di-trans,octa-cis-undecaprenyl diphosphate + H(+). The catalysed reaction is Preferential cleavage: (Ac)2-L-Lys-D-Ala-|-D-Ala. Also transpeptidation of peptidyl-alanyl moieties that are N-acyl substituents of D-alanine.. It functions in the pathway cell wall biogenesis; peptidoglycan biosynthesis. Its function is as follows. Cell wall formation. Synthesis of cross-linked peptidoglycan from the lipid intermediates. The enzyme has a penicillin-insensitive transglycosylase N-terminal domain (formation of linear glycan strands) and a penicillin-sensitive transpeptidase C-terminal domain (cross-linking of the peptide subunits). The sequence is that of Penicillin-binding protein 1A (mrcA) from Neisseria meningitidis serogroup A / serotype 4A (strain DSM 15465 / Z2491).